Reading from the N-terminus, the 194-residue chain is Ribonuclease HII (194 aa).

One can recognise an RNase H type-2 domain in the interval 3 to 193; that stretch reads ILTAGVDEAG…VRNLLAQQAL (191 aa). Residues D9, E10, and D101 each coordinate a divalent metal cation.

This sequence belongs to the RNase HII family. Mn(2+) is required as a cofactor. Mg(2+) serves as cofactor.

It localises to the cytoplasm. The catalysed reaction is Endonucleolytic cleavage to 5'-phosphomonoester.. Endonuclease that specifically degrades the RNA of RNA-DNA hybrids. The polypeptide is Ribonuclease HII (Neisseria gonorrhoeae (strain ATCC 700825 / FA 1090)).